Reading from the N-terminus, the 203-residue chain is MKRLGREFYNRDSLIVARELLGKVLVHEIEGQKVSARIVETEAYRGIEDKAAHSYGGKRTPRVEVMYGGPGFSYVFIVYGMHYCFNVVTREEGNPQAVLIRAAEPREGSELMAQNRFKKSYHQLNKSQILGLTNGPGKLCRALSIDKSLNGEDLCGSKLYVAEESQESLSIVTAKRVGIDYAEEAKDYPWRFYLEDSQYVSVK.

The protein belongs to the DNA glycosylase MPG family.

The sequence is that of Putative 3-methyladenine DNA glycosylase from Desulfitobacterium hafniense (strain Y51).